We begin with the raw amino-acid sequence, 323 residues long: tRNA U34 carboxymethyltransferase (323 aa).

Carboxy-S-adenosyl-L-methionine contacts are provided by residues Lys91, Trp105, Lys110, Gly130, 152 to 154 (DPT), 181 to 182 (IE), Met196, Tyr200, and Arg315.

The protein belongs to the class I-like SAM-binding methyltransferase superfamily. CmoB family. In terms of assembly, homotetramer.

It carries out the reaction carboxy-S-adenosyl-L-methionine + 5-hydroxyuridine(34) in tRNA = 5-carboxymethoxyuridine(34) in tRNA + S-adenosyl-L-homocysteine + H(+). Its function is as follows. Catalyzes carboxymethyl transfer from carboxy-S-adenosyl-L-methionine (Cx-SAM) to 5-hydroxyuridine (ho5U) to form 5-carboxymethoxyuridine (cmo5U) at position 34 in tRNAs. This is tRNA U34 carboxymethyltransferase from Escherichia coli O6:H1 (strain CFT073 / ATCC 700928 / UPEC).